Reading from the N-terminus, the 497-residue chain is Probable cytosol aminopeptidase (497 aa).

Residues Lys267 and Asp272 each contribute to the Mn(2+) site. Lys279 is an active-site residue. Residues Asp290, Asp349, and Glu351 each contribute to the Mn(2+) site. Arg353 is a catalytic residue.

Belongs to the peptidase M17 family. Mn(2+) is required as a cofactor.

The protein localises to the cytoplasm. It catalyses the reaction Release of an N-terminal amino acid, Xaa-|-Yaa-, in which Xaa is preferably Leu, but may be other amino acids including Pro although not Arg or Lys, and Yaa may be Pro. Amino acid amides and methyl esters are also readily hydrolyzed, but rates on arylamides are exceedingly low.. It carries out the reaction Release of an N-terminal amino acid, preferentially leucine, but not glutamic or aspartic acids.. Functionally, presumably involved in the processing and regular turnover of intracellular proteins. Catalyzes the removal of unsubstituted N-terminal amino acids from various peptides. This is Probable cytosol aminopeptidase from Pseudomonas entomophila (strain L48).